The primary structure comprises 501 residues: CUGBP Elav-like family member 1 (501 aa).

The binds strongly to URE stretch occupies residues Asn-2–Arg-196. 2 RRM domains span residues Ile-16–Ser-99 and Arg-108–Thr-188. Low complexity-rich tracts occupy residues Pro-274 to Gly-298 and Ser-312 to Asn-323. Residues Pro-274–Asn-323 form a disordered region. The segment at Leu-397–Tyr-501 is binds strongly to URE. Residues Ala-416–Ser-494 form the RRM 3 domain.

Belongs to the CELF/BRUNOL family.

It localises to the nucleus. The protein resides in the cytoplasm. Functionally, RNA-binding protein implicated in the regulation of several post-transcriptional events. May be involved in mRNA translation activation and stability. Involved in the regulation of muscle-specific splicing of alpha actinin pre-mRNAs via the binding to the UR-repeat element (URE) at the branch point of the non-muscle (NM) exon. This is CUGBP Elav-like family member 1 (celf1) from Danio rerio (Zebrafish).